A 296-amino-acid polypeptide reads, in one-letter code: Cytoplasmic envelopment protein 1 (296 aa).

The protein belongs to the herpesviridae cytoplasmic envelopment protein 1 family. In terms of assembly, interacts with UL51; this interaction allows incorporation of UL7 within the virion.

It is found in the virion. It localises to the virion tegument. The protein localises to the host cytoplasm. The protein resides in the host Golgi apparatus. Its function is as follows. Plays a critical role in cytoplasmic virus egress. Participates in the final step of tegumentation and envelope acquisition within the host cytoplasm. This is Cytoplasmic envelopment protein 1 (UL7) from Human herpesvirus 1 (strain 17) (HHV-1).